Here is a 511-residue protein sequence, read N- to C-terminus: Probable DNA ligase (511 aa).

An ATP-binding site is contributed by Glu-208. Residue Lys-210 is the N6-AMP-lysine intermediate of the active site. ATP contacts are provided by Arg-215, Arg-230, Glu-259, Phe-299, Arg-377, and Lys-383.

It belongs to the ATP-dependent DNA ligase family. It depends on Mg(2+) as a cofactor.

The catalysed reaction is ATP + (deoxyribonucleotide)n-3'-hydroxyl + 5'-phospho-(deoxyribonucleotide)m = (deoxyribonucleotide)n+m + AMP + diphosphate.. Its function is as follows. DNA ligase that seals nicks in double-stranded DNA during DNA replication, DNA recombination and DNA repair. The polypeptide is Probable DNA ligase (Streptomyces griseus subsp. griseus (strain JCM 4626 / CBS 651.72 / NBRC 13350 / KCC S-0626 / ISP 5235)).